Here is a 72-residue protein sequence, read N- to C-terminus: Heat-stable enterotoxin A2 (72 aa).

Positions Met1 to Ala19 are cleaved as a signal peptide. Positions Gln20–Met53 are excised as a propeptide. 3 disulfide bridges follow: Cys59/Cys64, Cys60/Cys68, and Cys63/Cys71.

Belongs to the heat-stable enterotoxin family.

It is found in the secreted. Functionally, toxin which activates the particulate form of guanylate cyclase and increases cyclic GMP levels within the host intestinal epithelial cells. This chain is Heat-stable enterotoxin A2 (sta2), found in Escherichia coli.